A 244-amino-acid polypeptide reads, in one-letter code: Leucyl/phenylalanyl-tRNA--protein transferase (244 aa).

Positions 1–22 (MHSQPYLLSPAPNNTPFPPAEH) are disordered.

This sequence belongs to the L/F-transferase family.

It localises to the cytoplasm. The enzyme catalyses N-terminal L-lysyl-[protein] + L-leucyl-tRNA(Leu) = N-terminal L-leucyl-L-lysyl-[protein] + tRNA(Leu) + H(+). It catalyses the reaction N-terminal L-arginyl-[protein] + L-leucyl-tRNA(Leu) = N-terminal L-leucyl-L-arginyl-[protein] + tRNA(Leu) + H(+). It carries out the reaction L-phenylalanyl-tRNA(Phe) + an N-terminal L-alpha-aminoacyl-[protein] = an N-terminal L-phenylalanyl-L-alpha-aminoacyl-[protein] + tRNA(Phe). In terms of biological role, functions in the N-end rule pathway of protein degradation where it conjugates Leu, Phe and, less efficiently, Met from aminoacyl-tRNAs to the N-termini of proteins containing an N-terminal arginine or lysine. The polypeptide is Leucyl/phenylalanyl-tRNA--protein transferase (Xylella fastidiosa (strain M12)).